The primary structure comprises 481 residues: uncharacterized protein (481 aa).

A run of 11 helical transmembrane segments spans residues 14-34, 46-66, 90-110, 134-154, 167-187, 218-238, 258-278, 303-323, 377-397, 411-431, and 446-466; these read LGFC…GIFL, FAPM…IVFA, IGIY…GVLA, FSVK…INLF, TVGK…IITT, FSSM…FESI, IAIF…MLLG, IIVV…SFGA, LAVI…IALA, AFTD…LAVS, and YFSI…AYLH.

It belongs to the amino acid-polyamine-organocation (APC) superfamily.

The protein localises to the cell membrane. Functionally, probable amino-acid or metabolite transport protein. This is an uncharacterized protein from Mycobacterium bovis (strain ATCC BAA-935 / AF2122/97).